The primary structure comprises 345 residues: Uroporphyrinogen decarboxylase (345 aa).

Substrate-binding positions include 27 to 31 (RQAGR), F46, D76, Y152, S207, and H321.

The protein belongs to the uroporphyrinogen decarboxylase family. Homodimer.

It is found in the cytoplasm. It catalyses the reaction uroporphyrinogen III + 4 H(+) = coproporphyrinogen III + 4 CO2. It participates in porphyrin-containing compound metabolism; protoporphyrin-IX biosynthesis; coproporphyrinogen-III from 5-aminolevulinate: step 4/4. Functionally, catalyzes the decarboxylation of four acetate groups of uroporphyrinogen-III to yield coproporphyrinogen-III. The sequence is that of Uroporphyrinogen decarboxylase from Staphylococcus aureus (strain Mu3 / ATCC 700698).